We begin with the raw amino-acid sequence, 102 residues long: MYAIVMAGGKQYKVQEGATITVDLLAAEAGSEYVLDKVLMIGGGEAKIGAPYVAGAAVTCQVAGHVKGKKIVVFHKRRRKDSHKKQGHRQGYTQLKVTGIQA.

The protein belongs to the bacterial ribosomal protein bL21 family. Part of the 50S ribosomal subunit. Contacts protein L20.

Functionally, this protein binds to 23S rRNA in the presence of protein L20. The chain is Large ribosomal subunit protein bL21 from Solidesulfovibrio magneticus (strain ATCC 700980 / DSM 13731 / RS-1) (Desulfovibrio magneticus).